We begin with the raw amino-acid sequence, 412 residues long: Imidazolonepropionase (412 aa).

Histidine 73 and histidine 75 together coordinate Fe(3+). Zn(2+) is bound by residues histidine 73 and histidine 75. Residues arginine 82, tyrosine 145, and histidine 178 each contribute to the 4-imidazolone-5-propanoate site. Tyrosine 145 serves as a coordination point for N-formimidoyl-L-glutamate. Histidine 247 provides a ligand contact to Fe(3+). Histidine 247 provides a ligand contact to Zn(2+). 4-imidazolone-5-propanoate is bound at residue glutamine 250. Residue aspartate 322 coordinates Fe(3+). Zn(2+) is bound at residue aspartate 322. N-formimidoyl-L-glutamate-binding residues include asparagine 324 and glycine 326. Serine 327 lines the 4-imidazolone-5-propanoate pocket.

This sequence belongs to the metallo-dependent hydrolases superfamily. HutI family. Requires Zn(2+) as cofactor. Fe(3+) is required as a cofactor.

The protein resides in the cytoplasm. The enzyme catalyses 4-imidazolone-5-propanoate + H2O = N-formimidoyl-L-glutamate. The protein operates within amino-acid degradation; L-histidine degradation into L-glutamate; N-formimidoyl-L-glutamate from L-histidine: step 3/3. Catalyzes the hydrolytic cleavage of the carbon-nitrogen bond in imidazolone-5-propanoate to yield N-formimidoyl-L-glutamate. It is the third step in the universal histidine degradation pathway. In Shewanella amazonensis (strain ATCC BAA-1098 / SB2B), this protein is Imidazolonepropionase.